Reading from the N-terminus, the 632-residue chain is Bifunctional protein GlmU (632 aa).

The pyrophosphorylase stretch occupies residues 1-229 (MAERELSVAI…PQEIVGVNDR (229 aa)). UDP-N-acetyl-alpha-D-glucosamine is bound by residues 11 to 14 (LAAG), K25, Q76, and 81 to 82 (GT). D106 provides a ligand contact to Mg(2+). UDP-N-acetyl-alpha-D-glucosamine-binding residues include G143, E158, N173, and N227. A Mg(2+)-binding site is contributed by N227. The linker stretch occupies residues 230-250 (RQLAQAYQILQDRLKEAWMEA). Positions 251 to 632 (GVTFVDPDSS…ADNSRPKSLQ (382 aa)) are N-acetyltransferase. UDP-N-acetyl-alpha-D-glucosamine contacts are provided by R332 and K350. The active-site Proton acceptor is H362. Y365 and N376 together coordinate UDP-N-acetyl-alpha-D-glucosamine. Acetyl-CoA is bound by residues A379, 385–386 (NY), A422, and R441. The segment at 600 to 632 (VAGDPCWPSPPPQPQQNQQTKPEADNSRPKSLQ) is disordered. Over residues 621–632 (PEADNSRPKSLQ) the composition is skewed to basic and acidic residues.

In the N-terminal section; belongs to the N-acetylglucosamine-1-phosphate uridyltransferase family. It in the C-terminal section; belongs to the transferase hexapeptide repeat family. In terms of assembly, homotrimer. Mg(2+) serves as cofactor.

The protein resides in the cytoplasm. The catalysed reaction is alpha-D-glucosamine 1-phosphate + acetyl-CoA = N-acetyl-alpha-D-glucosamine 1-phosphate + CoA + H(+). It catalyses the reaction N-acetyl-alpha-D-glucosamine 1-phosphate + UTP + H(+) = UDP-N-acetyl-alpha-D-glucosamine + diphosphate. It functions in the pathway nucleotide-sugar biosynthesis; UDP-N-acetyl-alpha-D-glucosamine biosynthesis; N-acetyl-alpha-D-glucosamine 1-phosphate from alpha-D-glucosamine 6-phosphate (route II): step 2/2. It participates in nucleotide-sugar biosynthesis; UDP-N-acetyl-alpha-D-glucosamine biosynthesis; UDP-N-acetyl-alpha-D-glucosamine from N-acetyl-alpha-D-glucosamine 1-phosphate: step 1/1. The protein operates within bacterial outer membrane biogenesis; LPS lipid A biosynthesis. Its function is as follows. Catalyzes the last two sequential reactions in the de novo biosynthetic pathway for UDP-N-acetylglucosamine (UDP-GlcNAc). The C-terminal domain catalyzes the transfer of acetyl group from acetyl coenzyme A to glucosamine-1-phosphate (GlcN-1-P) to produce N-acetylglucosamine-1-phosphate (GlcNAc-1-P), which is converted into UDP-GlcNAc by the transfer of uridine 5-monophosphate (from uridine 5-triphosphate), a reaction catalyzed by the N-terminal domain. The protein is Bifunctional protein GlmU of Synechococcus sp. (strain JA-2-3B'a(2-13)) (Cyanobacteria bacterium Yellowstone B-Prime).